The primary structure comprises 432 residues: Glutamate-1-semialdehyde 2,1-aminomutase 1 (432 aa).

Lysine 268 is modified (N6-(pyridoxal phosphate)lysine).

This sequence belongs to the class-III pyridoxal-phosphate-dependent aminotransferase family. HemL subfamily. As to quaternary structure, homodimer. It depends on pyridoxal 5'-phosphate as a cofactor.

It localises to the cytoplasm. The catalysed reaction is (S)-4-amino-5-oxopentanoate = 5-aminolevulinate. The protein operates within porphyrin-containing compound metabolism; protoporphyrin-IX biosynthesis; 5-aminolevulinate from L-glutamyl-tRNA(Glu): step 2/2. The sequence is that of Glutamate-1-semialdehyde 2,1-aminomutase 1 from Bacillus cereus (strain B4264).